A 597-amino-acid polypeptide reads, in one-letter code: Elongation factor 4 (597 aa).

Positions 2 to 184 (KNIRNFSIIA…EIVAKIPAPT (183 aa)) constitute a tr-type G domain. Residues 14 to 19 (DHGKST) and 131 to 134 (NKID) contribute to the GTP site.

The protein belongs to the TRAFAC class translation factor GTPase superfamily. Classic translation factor GTPase family. LepA subfamily.

The protein localises to the cell inner membrane. The catalysed reaction is GTP + H2O = GDP + phosphate + H(+). Functionally, required for accurate and efficient protein synthesis under certain stress conditions. May act as a fidelity factor of the translation reaction, by catalyzing a one-codon backward translocation of tRNAs on improperly translocated ribosomes. Back-translocation proceeds from a post-translocation (POST) complex to a pre-translocation (PRE) complex, thus giving elongation factor G a second chance to translocate the tRNAs correctly. Binds to ribosomes in a GTP-dependent manner. The polypeptide is Elongation factor 4 (Neisseria meningitidis serogroup C (strain 053442)).